The sequence spans 550 residues: Zorya protein ZorA (550 aa).

3 helical membrane-spanning segments follow: residues 16 to 36, 52 to 72, and 92 to 112; these read TLIT…AWWC, LMGA…LLNF, and FITS…DAFF.

The protein belongs to the MotA family.

It localises to the cell inner membrane. Its function is as follows. Component of antiviral defense system Zorya type II, composed of ZorA, ZorB and ZorE. Expression of Zorya type II in E.coli (strain MG1655) confers resistance to phages SECphi7 and T7. While most T7 infected Zorya-containing cells undergo abortive infection, a minority produce viable phage progeny. These eventually accumulate to a high multiplicity of infection, leading to culture collapse by 170 minutes after initial infection. ZorA and ZorB probably assemble in the cell inner membrane and exert their effect there. The protein is Zorya protein ZorA of Escherichia coli (strain ATCC 8739 / DSM 1576 / NBRC 3972 / NCIMB 8545 / WDCM 00012 / Crooks).